The sequence spans 216 residues: Chaperone protein TorD (216 aa).

It belongs to the TorD/DmsD family. TorD subfamily.

Its subcellular location is the cytoplasm. Its function is as follows. Involved in the biogenesis of TorA. Acts on TorA before the insertion of the molybdenum cofactor and, as a result, probably favors a conformation of the apoenzyme that is competent for acquiring the cofactor. The polypeptide is Chaperone protein TorD (Photobacterium profundum (strain SS9)).